The following is a 217-amino-acid chain: Ubiquitin-conjugating enzyme E2 1 (217 aa).

A UBC core domain is found at 4 to 151; sequence NRSRRIAKEL…AREWTSSYAA (148 aa). Residue Cys-89 is the Glycyl thioester intermediate of the active site.

The protein belongs to the ubiquitin-conjugating enzyme family.

It is found in the cytoplasm. The protein resides in the nucleus. The catalysed reaction is S-ubiquitinyl-[E1 ubiquitin-activating enzyme]-L-cysteine + [E2 ubiquitin-conjugating enzyme]-L-cysteine = [E1 ubiquitin-activating enzyme]-L-cysteine + S-ubiquitinyl-[E2 ubiquitin-conjugating enzyme]-L-cysteine.. The protein operates within protein modification; protein ubiquitination. In terms of biological role, catalyzes the covalent attachment of ubiquitin to other proteins. Functions in degradation of misfolded or regulated proteins localized in the endoplasmic reticulum (ER) lumen or membrane via the ubiquitin-proteasome system. Cognate E2 conjugating enzyme for the HRD1 ubiquitin ligase complex, which is part of the ERAD-L and ERAD-M pathways responsible for the rapid degradation of soluble lumenal and membrane proteins with misfolded lumenal domains (ERAD-L), or ER-membrane proteins with misfolded transmembrane domains (ERAD-M). In Schizosaccharomyces pombe (strain 972 / ATCC 24843) (Fission yeast), this protein is Ubiquitin-conjugating enzyme E2 1 (ubc1).